Here is a 249-residue protein sequence, read N- to C-terminus: Elongation factor Ts (249 aa).

Residues 82-85 form an involved in Mg(2+) ion dislocation from EF-Tu region; it reads TDFV. Positions 215–249 are disordered; the sequence is QAGQLAPEAESTTETADATSETTTEKSSAKKKKKK. Low complexity predominate over residues 222–236; the sequence is EAESTTETADATSET.

Belongs to the EF-Ts family.

The protein localises to the cytoplasm. In terms of biological role, associates with the EF-Tu.GDP complex and induces the exchange of GDP to GTP. It remains bound to the aminoacyl-tRNA.EF-Tu.GTP complex up to the GTP hydrolysis stage on the ribosome. This chain is Elongation factor Ts, found in Rippkaea orientalis (strain PCC 8801 / RF-1) (Cyanothece sp. (strain PCC 8801)).